Reading from the N-terminus, the 261-residue chain is MAWFDDTYYFEQAQLRIAHITDCHLFSDKQGEYFGVNTAEHFTRALTDIAKQQPDALIFGGDLTQDHSFNSYLLFAELIHNSDLDCPVFWVPGNHDEIDQLNLISGGQIQRAKHIVAQGFELILINSKGNTPAGWVTPSHLEEIMACLVDSDNRHIAFCHHNPLPINGYLDKHMLENGPQLLNLLVNNGRVDALFHGHVHNDYQQQFRELDIYATPASSVQFTKHSATWQQEDKGAAYRMLHLNAEQQKVHIRTDVVWLNE.

Residues aspartate 22, histidine 24, aspartate 62, asparagine 94, histidine 160, histidine 198, and histidine 200 each coordinate Fe cation. AMP-binding positions include histidine 24, aspartate 62, and 94-95 (NH). Histidine 200 contributes to the AMP binding site.

It belongs to the cyclic nucleotide phosphodiesterase class-III family. The cofactor is Fe(2+).

This chain is Probable cyclic nucleotide phosphodiesterase PSM_A2567, found in Pseudoalteromonas sp. (strain SM9913).